Consider the following 234-residue polypeptide: UPF0309 protein lmo0025 (234 aa).

One can recognise an SIS domain in the interval 31–205; the sequence is VADSIMNDGI…ELMLEKGYTP (175 aa).

It belongs to the UPF0309 family.

The chain is UPF0309 protein lmo0025 from Listeria monocytogenes serovar 1/2a (strain ATCC BAA-679 / EGD-e).